The following is a 428-amino-acid chain: Delta-aminolevulinic acid dehydratase, chloroplastic (428 aa).

K294 serves as the catalytic Schiff-base intermediate with substrate. 5-aminolevulinate-binding residues include R304 and K316. Residue E332 participates in Mg(2+) binding. The Schiff-base intermediate with substrate role is filled by K347. The 5-aminolevulinate site is built by S373 and Y412.

Belongs to the ALAD family. As to quaternary structure, homooctamer. It depends on Mg(2+) as a cofactor.

The protein localises to the plastid. It localises to the chloroplast. The enzyme catalyses 2 5-aminolevulinate = porphobilinogen + 2 H2O + H(+). It participates in porphyrin-containing compound metabolism; protoporphyrin-IX biosynthesis; coproporphyrinogen-III from 5-aminolevulinate: step 1/4. Its function is as follows. Catalyzes an early step in the biosynthesis of tetrapyrroles. Binds two molecules of 5-aminolevulinate per subunit, each at a distinct site, and catalyzes their condensation to form porphobilinogen. This chain is Delta-aminolevulinic acid dehydratase, chloroplastic (HEMB), found in Hordeum vulgare (Barley).